Consider the following 336-residue polypeptide: Transcription initiation factor IIB (336 aa).

Residues 41 to 72 (QKLRCPICGNTVFIEDAERGQIVCASCGYVLM) form a TFIIB-type zinc finger. C45, C48, C64, and C67 together coordinate Zn(2+). 2 repeat units span residues 152-235 (HELN…AREL) and 246-327 (QYVP…ELAK).

Belongs to the TFIIB family.

Its function is as follows. Stabilizes TBP binding to an archaeal box-A promoter. Also responsible for recruiting RNA polymerase II to the pre-initiation complex (DNA-TBP-TFIIB). This chain is Transcription initiation factor IIB, found in Caldivirga maquilingensis (strain ATCC 700844 / DSM 13496 / JCM 10307 / IC-167).